Reading from the N-terminus, the 248-residue chain is Exosome complex component Rrp41 (248 aa).

It belongs to the RNase PH family. Rrp41 subfamily. Component of the archaeal exosome complex. Forms a hexameric ring-like arrangement composed of 3 Rrp41-Rrp42 heterodimers. The hexameric ring associates with a trimer of Rrp4 and/or Csl4 subunits.

Its subcellular location is the cytoplasm. Functionally, catalytic component of the exosome, which is a complex involved in RNA degradation. Has 3'-&gt;5' exoribonuclease activity. Can also synthesize heteromeric RNA-tails. This is Exosome complex component Rrp41 from Thermoplasma volcanium (strain ATCC 51530 / DSM 4299 / JCM 9571 / NBRC 15438 / GSS1).